The primary structure comprises 73 residues: uncharacterized protein (73 aa).

This is an uncharacterized protein from Caprine arthritis encephalitis virus (CAEV).